Reading from the N-terminus, the 397-residue chain is Sexual differentiation process protein isp7 (397 aa).

A Fe2OG dioxygenase domain is found at 255-353 (PTTSIRLLRY…RYTIPFFLQG (99 aa)).

The protein belongs to the iron/ascorbate-dependent oxidoreductase family.

This chain is Sexual differentiation process protein isp7 (isp7), found in Schizosaccharomyces pombe (strain 972 / ATCC 24843) (Fission yeast).